The following is a 304-amino-acid chain: Homoserine O-acetyltransferase (304 aa).

Catalysis depends on cysteine 142, which acts as the Acyl-thioester intermediate. The substrate site is built by lysine 163 and serine 192. The active-site Proton acceptor is histidine 235. Glutamate 237 is an active-site residue. Position 249 (arginine 249) interacts with substrate.

This sequence belongs to the MetA family.

Its subcellular location is the cytoplasm. The catalysed reaction is L-homoserine + acetyl-CoA = O-acetyl-L-homoserine + CoA. The protein operates within amino-acid biosynthesis; L-methionine biosynthesis via de novo pathway; O-acetyl-L-homoserine from L-homoserine: step 1/1. Functionally, transfers an acetyl group from acetyl-CoA to L-homoserine, forming acetyl-L-homoserine. This chain is Homoserine O-acetyltransferase, found in Clostridium beijerinckii (strain ATCC 51743 / NCIMB 8052) (Clostridium acetobutylicum).